The sequence spans 97 residues: Small cell adhesion glycoprotein (97 aa).

Residues 1–36 (MTSLLTTPSPREELMTTPILQPTEALSPEDGASTAL) are Extracellular-facing. The O-linked (GalNAc...) threonine glycan is linked to Thr-2. An O-linked (GalNAc...) serine glycan is attached at Ser-3. O-linked (GalNAc...) threonine glycans are attached at residues Thr-6 and Thr-7. O-linked (GalNAc...) serine glycosylation is present at Ser-9. Thr-16, Thr-17, and Thr-23 each carry an O-linked (GalNAc...) threonine glycan. Residues 37 to 57 (IAVVITVVFLTLLSVVILIFF) traverse the membrane as a helical; Signal-anchor for type III membrane protein segment. The Cytoplasmic portion of the chain corresponds to 58–97 (YLYKNKGSYVTYEPTEGEPSAIVQMESDLAKGSEKEEYFI).

It belongs to the SMAGP family. O-glycosylated. The O-glycan is modified with sialic acid residues. In terms of tissue distribution, detected in breast, endometrium, colon and biliary tract. Detected in polarized epithelial structures characterized by cell-cell adhesion (at protein level).

Its subcellular location is the cell membrane. The protein localises to the cytoplasmic vesicle membrane. Functionally, may play a role in epithelial cell-cell contacts. May play a role in tumor invasiveness and metastasis formation. This chain is Small cell adhesion glycoprotein (SMAGP), found in Homo sapiens (Human).